The primary structure comprises 82 residues: Small ribosomal subunit protein uS17 (82 aa).

It belongs to the universal ribosomal protein uS17 family. Part of the 30S ribosomal subunit.

One of the primary rRNA binding proteins, it binds specifically to the 5'-end of 16S ribosomal RNA. The sequence is that of Small ribosomal subunit protein uS17 from Azorhizobium caulinodans (strain ATCC 43989 / DSM 5975 / JCM 20966 / LMG 6465 / NBRC 14845 / NCIMB 13405 / ORS 571).